We begin with the raw amino-acid sequence, 658 residues long: MLKVVGASWQKTRIGTYILIGAGLLVIGAFFIGYMERPEYDGTYCATALWTKQVGFQIENWKQQNDLVNIPTGVGRICYKDSVYENGWAQIEVETQRTYPDWVQAYAAGMLEGSLTWRNIYNQWSNTISSSCERDESTQKFCGWLRDLLTTNYHRLKRQTEKAENDHYWHQLHLFITQLEGLETGYKRGASRARSDLEEEIPFSDFLLMNAAADIQDLKIYYENYELQNSTEHTEEPGTDQPKNFFLPSATMLTKIVQEEESPQVLQLLFGHSTAGSYSSMLRIQKRYKFHYHFSSKLRSNTVPGVDITFTGYPGILGSTDDFYTIKGRHLHAIVGGVGIKNENLQLWKTVDPKKMVPLVARVMAANRISQNRQTWASAMSRHPFTGAKQWITVDLNKMKVQDNLYNVLEGDDKHDDAPVVLNEKDRTAIQQRHDQLRDMVWIAEQLPGMMTKKDVTQGFLVPGNTSWLANGVPYFKNVLELSGVNYSEDQQLTVADEEELTSLASVDKYLRTHGFRGDLLGSQESIAYGNIDLKLFSYNARLGISDFHAFAGPVFLRFQHTQPRTLEDEGQDGGVPPAASMGDERLSVSIEDADSLAEMELITERRSVRNDMRAIAMRKIGSGPFKWSEMSPVEEGGGHEGHPDEWNFDKVSPKWAW.

Positions 1 to 29 (MLKVVGASWQKTRIGTYILIGAGLLVIGA) are cleaved as a signal peptide. Residues Asn-229, Asn-465, and Asn-486 are each glycosylated (N-linked (GlcNAc...) asparagine).

Belongs to the phospholipase B-like family. As to expression, expressed in neural and glial progenitors prior to, but not after, differentiation. Not expressed in late third instar disks, but is expressed uniformly by early third instar disks, in the imaginal ring of the proventriculus and in the salivary gland.

The protein resides in the secreted. In terms of biological role, putative phospholipase. Involved in the regulation of cellular plasticity in imaginal disks. In Drosophila melanogaster (Fruit fly), this protein is Putative phospholipase B-like lamina ancestor (lama).